Consider the following 622-residue polypeptide: Apical membrane antigen 1 (622 aa).

The first 24 residues, 1 to 24 (MRKLYCVLLLSAFEFTYMINFGRG), serve as a signal peptide directing secretion. Topologically, residues 25-546 (QNYWEHPYQK…EHKPTYDKMK (522 aa)) are extracellular. Disulfide bonds link Cys149–Cys302, Cys217–Cys247, Cys263–Cys275, Cys320–Cys418, and Cys337–Cys409. Asn162 is a glycosylation site (N-linked (GlcNAc...) asparagine). 5 N-linked (GlcNAc...) asparagine glycosylation sites follow: Asn286, Asn371, Asn421, Asn422, and Asn499. 3 cysteine pairs are disulfide-bonded: Cys443-Cys502, Cys490-Cys507, and Cys492-Cys509. A helical membrane pass occupies residues 547-567 (IIIASSAAVAVLATILMVYLY). Residues 568 to 622 (KRKGNAEKYDKMDEPQDYGKSNSRNDEMLDPEASFWGEEKRASHTTPVLMEKPYY) are Cytoplasmic-facing. Residues 577-607 (DKMDEPQDYGKSNSRNDEMLDPEASFWGEEK) form a disordered region.

This sequence belongs to the apicomplexan parasites AMA1 family.

It is found in the membrane. Functionally, involved in parasite invasion of erythrocytes. In Plasmodium falciparum (isolate 7G8), this protein is Apical membrane antigen 1 (AMA-1).